The primary structure comprises 118 residues: Large ribosomal subunit protein uL18 (118 aa).

It belongs to the universal ribosomal protein uL18 family. As to quaternary structure, part of the 50S ribosomal subunit; part of the 5S rRNA/L5/L18/L25 subcomplex. Contacts the 5S and 23S rRNAs.

This is one of the proteins that bind and probably mediate the attachment of the 5S RNA into the large ribosomal subunit, where it forms part of the central protuberance. In Dichelobacter nodosus (strain VCS1703A), this protein is Large ribosomal subunit protein uL18.